Here is a 249-residue protein sequence, read N- to C-terminus: Tetrahydromethanopterin S-methyltransferase subunit A (249 aa).

The Cytoplasmic portion of the chain corresponds to 1–227; sequence MADKKEVIQN…KISSGYYAGK (227 aa). H84 contacts 5-hydroxybenzimidazolylcob(I)amide. The helical transmembrane segment at 228–248 threads the bilayer; sequence IEGIVIGFILTLVFLIIIIQG. Position 249 (L249) is a topological domain, extracellular.

The protein belongs to the MtrA family. The complex is composed of 8 subunits; MtrA, MtrB, MtrC, MtrD, MtrE, MtrF, MtrG and MtrH. 5-hydroxybenzimidazolylcob(I)amide is required as a cofactor.

It localises to the cell membrane. The catalysed reaction is 5-methyl-5,6,7,8-tetrahydromethanopterin + coenzyme M + 2 Na(+)(in) = 5,6,7,8-tetrahydromethanopterin + methyl-coenzyme M + 2 Na(+)(out). It functions in the pathway one-carbon metabolism; methanogenesis from CO(2); methyl-coenzyme M from 5,10-methylene-5,6,7,8-tetrahydromethanopterin: step 2/2. In terms of biological role, part of a complex that catalyzes the formation of methyl-coenzyme M and tetrahydromethanopterin from coenzyme M and methyl-tetrahydromethanopterin. This is an energy-conserving, sodium-ion translocating step. The protein is Tetrahydromethanopterin S-methyltransferase subunit A of Methanosphaera stadtmanae (strain ATCC 43021 / DSM 3091 / JCM 11832 / MCB-3).